The primary structure comprises 1100 residues: ATP-dependent DNA helicase mph1 (1100 aa).

A compositionally biased stretch (acidic residues) spans Met-1–Ala-21. Residues Met-1 to Asn-250 are disordered. A compositionally biased stretch (low complexity) spans Arg-38–Phe-61. Positions Phe-84 to Ser-94 are enriched in basic and acidic residues. The segment covering Asn-104 to Gln-117 has biased composition (polar residues). The segment covering Pro-135–Pro-146 has biased composition (pro residues). 2 stretches are compositionally biased toward polar residues: residues Arg-182–Ser-191 and Asn-200–Glu-209. Acidic residues predominate over residues Asp-212–Asp-223. The span at Ser-237–Ser-249 shows a compositional bias: low complexity. A Helicase ATP-binding domain is found at Ile-317–Lys-485. Residue Leu-330–Thr-337 participates in ATP binding. The DEAH box motif lies at Asp-433–His-436. The Helicase C-terminal domain occupies Tyr-655–Lys-829. Disordered stretches follow at residues Pro-850–Val-913 and Arg-1003–Arg-1100. Composition is skewed to basic residues over residues Arg-863 to Phe-875 and Gly-1019 to Arg-1028. Residues Gln-1053–Asp-1066 are compositionally biased toward polar residues. Acidic residues predominate over residues Leu-1082–Asp-1092.

Belongs to the DEAD box helicase family. DEAH subfamily. FANCM sub-subfamily. As to quaternary structure, interacts with the MHF histone-fold complex to form the FANCM-MHF complex.

The protein resides in the nucleus. The enzyme catalyses ATP + H2O = ADP + phosphate + H(+). In terms of biological role, ATP-dependent DNA helicase involved in DNA damage repair by homologous recombination and in genome maintenance. Capable of unwinding D-loops. Plays a role in limiting crossover recombinants during mitotic DNA double-strand break (DSB) repair. Component of a FANCM-MHF complex which promotes gene conversion at blocked replication forks, probably by reversal of the stalled fork. This is ATP-dependent DNA helicase mph1 from Aspergillus terreus (strain NIH 2624 / FGSC A1156).